Here is a 257-residue protein sequence, read N- to C-terminus: V-type proton ATPase subunit D (257 aa).

The disordered stretch occupies residues 215–257 (KEQEAAQKALEGPGPGEDAAHSENNPPRNLLASEEDNLPVLFN).

This sequence belongs to the V-ATPase D subunit family. In terms of assembly, V-ATPase is a heteromultimeric enzyme made up of two complexes: the ATP-hydrolytic V1 complex and the proton translocation V0 complex. The V1 complex consists of three catalytic AB heterodimers that form a heterohexamer, three peripheral stalks each consisting of EG heterodimers, one central rotor including subunits D and F, and the regulatory subunits C and H. The proton translocation complex V0 consists of the proton transport subunit a, a ring of proteolipid subunits c9c'', rotary subunit d, subunits e and f, and the accessory subunits vah-19/Ac45 and vah-20/PRR.

Functionally, subunit of the V1 complex of vacuolar(H+)-ATPase (V-ATPase), a multisubunit enzyme composed of a peripheral complex (V1) that hydrolyzes ATP and a membrane integral complex (V0) that translocates protons. V-ATPase is responsible for acidifying and maintaining the pH of intracellular compartments and in some cell types, is targeted to the plasma membrane, where it is responsible for acidifying the extracellular environment. The protein is V-type proton ATPase subunit D of Caenorhabditis elegans.